The chain runs to 453 residues: MMTLKEALSLASDDIKKLRDDLTLKIKESKIGAYVEQLTSTDISQSGVGIPIAIKDNINVKNWEITCSSNILKGYISPYNATVIEKLEKAGLSPFGRTNMDEFAMGSSTESSCYGKTLNPIDNEKVPGGSSGGSAAAVAGGIAIAALGTDTGGSIRQPAAYCGCVGMKPTYGRVSRYGITAYSSSLDQCGPITQNVEDAAILYDIISGYDPMDSTSANINYEAVTPKLNSDKKLTIAVIDNFVSQASPAIQKGFQKAVNALEEGGHKIIHKNMLDTQKIVSTYYIVATAEASANLARFDGVRFGNRKGESGLKDMYVQTKSQGFGHEVQKRIMLGSFVLSSGYYDAYYIKAQKVRHLIKDEYSKIFSEADLILSPVAPTTAPKFGSFKTSLEMYLSDIYTISVNLAGLPAISLPVDKDEDGMPIGLQFIANAYEEQTLFDGALSLEKAINYKK.

Residues lysine 55 and serine 130 each act as charge relay system in the active site. Serine 154 functions as the Acyl-ester intermediate in the catalytic mechanism.

It belongs to the amidase family. GatA subfamily. Heterotrimer of A, B and C subunits.

The catalysed reaction is L-glutamyl-tRNA(Gln) + L-glutamine + ATP + H2O = L-glutaminyl-tRNA(Gln) + L-glutamate + ADP + phosphate + H(+). In terms of biological role, allows the formation of correctly charged Gln-tRNA(Gln) through the transamidation of misacylated Glu-tRNA(Gln) in organisms which lack glutaminyl-tRNA synthetase. The reaction takes place in the presence of glutamine and ATP through an activated gamma-phospho-Glu-tRNA(Gln). The polypeptide is Glutamyl-tRNA(Gln) amidotransferase subunit A (Aliarcobacter butzleri (strain RM4018) (Arcobacter butzleri)).